The chain runs to 124 residues: Cytochrome c2 (124 aa).

Q1 carries the post-translational modification Pyrrolidone carboxylic acid. The heme c site is built by C15, C18, H19, and M100.

Binds 1 heme c group covalently per subunit.

Its subcellular location is the periplasm. In terms of biological role, cytochrome c2 is found mainly in purple, non-sulfur, photosynthetic bacteria where it functions as the electron donor to the oxidized bacteriochlorophyll in the photophosphorylation pathway. However, it may also have a role in the respiratory chain and is found in some non-photosynthetic bacteria. The protein is Cytochrome c2 (cycA) of Cereibacter sphaeroides (Rhodobacter sphaeroides).